The primary structure comprises 236 residues: Protein-L-isoaspartate O-methyltransferase 1 (236 aa).

Ser85 is a catalytic residue.

It belongs to the methyltransferase superfamily. L-isoaspartyl/D-aspartyl protein methyltransferase family.

It is found in the cytoplasm. The enzyme catalyses [protein]-L-isoaspartate + S-adenosyl-L-methionine = [protein]-L-isoaspartate alpha-methyl ester + S-adenosyl-L-homocysteine. Its function is as follows. Catalyzes the methyl esterification of L-isoaspartyl residues in peptides and proteins that result from spontaneous decomposition of normal L-aspartyl and L-asparaginyl residues. It plays a role in the repair and/or degradation of damaged proteins. The sequence is that of Protein-L-isoaspartate O-methyltransferase 1 from Polaromonas sp. (strain JS666 / ATCC BAA-500).